We begin with the raw amino-acid sequence, 794 residues long: uncharacterized protein (794 aa).

The N-terminal stretch at 1–22 is a signal peptide; that stretch reads MKFKYGAIVFSGLLGVSAILAA. C23 is lipidated: N-palmitoyl cysteine. C23 carries S-diacylglycerol cysteine lipidation. Composition is skewed to polar residues over residues 182–200 and 245–261; these read TSVQ…NNGV and QMST…DANQ. Disordered stretches follow at residues 182–208, 222–261, 474–529, 566–594, and 737–757; these read TSVQ…KIDK, NKAK…DANQ, FKIK…GKNG, SAAK…TEQK, and KNEK…RGKQ. Residues 475 to 501 show a composition bias toward low complexity; it reads KIKSSNKSKSSSSKSSTKAETGKTSGG. Positions 511–526 are enriched in polar residues; sequence GAQNQGKKGEGAQNQG. Positions 567–576 are enriched in basic and acidic residues; sequence AAKKEDKKSG. Polar residues predominate over residues 577–593; that stretch reads ESTTEQTQIQSKSVTEQ. A compositionally biased stretch (basic and acidic residues) spans 737-751; the sequence is KNEKKEGSDQKDSKS.

It belongs to the MG185/MG260 family.

Its subcellular location is the cell membrane. This is an uncharacterized protein from Mycoplasma pneumoniae (strain ATCC 29342 / M129 / Subtype 1) (Mycoplasmoides pneumoniae).